The primary structure comprises 78 residues: Small outer capsid protein (78 aa).

The protein belongs to the Tevenvirinae Soc family. Homotrimer. Interacts with the major capsid protein; three soc molecules associate with each interface between the major capsid protein facets.

Its subcellular location is the virion. Capsid decoration protein which helps to stabilize the capsid against extremes of pH and temperature. Once maturation and expansion of the capsid has occured, trimers of soc attach the interfaces between the hexamer of the major capsid protein. Acts as a 'glue' between neighboring hexameric capsomers. Dispensable for the head morphogenesis and phage infection. The polypeptide is Small outer capsid protein (Escherichia phage RB69 (Bacteriophage RB69)).